Reading from the N-terminus, the 64-residue chain is Cytochrome c oxidase subunit 2 (64 aa).

The Mitochondrial intermembrane segment spans residues 1 to 14 (MAHPSQLGFQDAAS). Residues 15 to 45 (PVMEELXHFHDHTLMIVFLISTLVXYIIVAM) form a helical membrane-spanning segment. Residues 46 to 64 (VSTKLTNKYVLDSQEIEIV) are Mitochondrial matrix-facing.

It belongs to the cytochrome c oxidase subunit 2 family. In terms of assembly, component of the cytochrome c oxidase (complex IV, CIV), a multisubunit enzyme composed of 14 subunits. The complex is composed of a catalytic core of 3 subunits MT-CO1, MT-CO2 and MT-CO3, encoded in the mitochondrial DNA, and 11 supernumerary subunits COX4I, COX5A, COX5B, COX6A, COX6B, COX6C, COX7A, COX7B, COX7C, COX8 and NDUFA4, which are encoded in the nuclear genome. The complex exists as a monomer or a dimer and forms supercomplexes (SCs) in the inner mitochondrial membrane with NADH-ubiquinone oxidoreductase (complex I, CI) and ubiquinol-cytochrome c oxidoreductase (cytochrome b-c1 complex, complex III, CIII), resulting in different assemblies (supercomplex SCI(1)III(2)IV(1) and megacomplex MCI(2)III(2)IV(2)). Found in a complex with TMEM177, COA6, COX18, COX20, SCO1 and SCO2. Interacts with TMEM177 in a COX20-dependent manner. Interacts with COX20. Interacts with COX16. Cu cation serves as cofactor.

The protein resides in the mitochondrion inner membrane. The enzyme catalyses 4 Fe(II)-[cytochrome c] + O2 + 8 H(+)(in) = 4 Fe(III)-[cytochrome c] + 2 H2O + 4 H(+)(out). Functionally, component of the cytochrome c oxidase, the last enzyme in the mitochondrial electron transport chain which drives oxidative phosphorylation. The respiratory chain contains 3 multisubunit complexes succinate dehydrogenase (complex II, CII), ubiquinol-cytochrome c oxidoreductase (cytochrome b-c1 complex, complex III, CIII) and cytochrome c oxidase (complex IV, CIV), that cooperate to transfer electrons derived from NADH and succinate to molecular oxygen, creating an electrochemical gradient over the inner membrane that drives transmembrane transport and the ATP synthase. Cytochrome c oxidase is the component of the respiratory chain that catalyzes the reduction of oxygen to water. Electrons originating from reduced cytochrome c in the intermembrane space (IMS) are transferred via the dinuclear copper A center (CU(A)) of subunit 2 and heme A of subunit 1 to the active site in subunit 1, a binuclear center (BNC) formed by heme A3 and copper B (CU(B)). The BNC reduces molecular oxygen to 2 water molecules using 4 electrons from cytochrome c in the IMS and 4 protons from the mitochondrial matrix. This Scaphirhynchus platorynchus (Shovelnose sturgeon) protein is Cytochrome c oxidase subunit 2 (mt-co2).